We begin with the raw amino-acid sequence, 476 residues long: Inactive glucose-1-phosphate adenylyltransferase small subunit 2, chloroplastic (476 aa).

The N-terminal 55 residues, 1–55 (MQISSSSFITKFTNLHMVRSTSDHHQWRHNYNLKQLFIPNLSVSNSQHLPLNQSV), are a transit peptide targeting the chloroplast.

It belongs to the bacterial/plant glucose-1-phosphate adenylyltransferase family. In terms of assembly, heterotetramer. Expressed at very low levels in leaves, inflorescences, fruits, and roots.

It localises to the plastid. The protein localises to the chloroplast. In Arabidopsis thaliana (Mouse-ear cress), this protein is Inactive glucose-1-phosphate adenylyltransferase small subunit 2, chloroplastic.